The chain runs to 242 residues: Zinc import ATP-binding protein ZnuC (242 aa).

The ABC transporter domain occupies 24–241; sequence INVKNLSFFY…EKFLKMFSSY (218 aa). 56–63 serves as a coordination point for ATP; it reads GPNGGGKT.

Belongs to the ABC transporter superfamily. Zinc importer (TC 3.A.1.15.5) family. As to quaternary structure, the complex is composed of two ATP-binding proteins (ZnuC), two transmembrane proteins (ZnuB) and a solute-binding protein (ZnuA).

It is found in the cell inner membrane. The catalysed reaction is Zn(2+)(out) + ATP(in) + H2O(in) = Zn(2+)(in) + ADP(in) + phosphate(in) + H(+)(in). Part of the ABC transporter complex ZnuABC involved in zinc import. Responsible for energy coupling to the transport system. This is Zinc import ATP-binding protein ZnuC from Ehrlichia canis (strain Jake).